Here is a 143-residue protein sequence, read N- to C-terminus: Photosystem II extrinsic protein U (143 aa).

Residues 1–29 form the signal peptide; sequence MKRLVGVLMILGLMLTSWGLLGSPQTAIA. A propeptide spanning residues 30-44 is cleaved from the precursor; that stretch reads ASLSPLSFNPSPVLA.

It belongs to the PsbU family. In terms of assembly, PSII is composed of 1 copy each of membrane proteins PsbA, PsbB, PsbC, PsbD, PsbE, PsbF, PsbH, PsbI, PsbJ, PsbK, PsbL, PsbM, PsbT, PsbX, PsbY, PsbZ, Psb30/Ycf12, peripheral proteins PsbO, CyanoQ (PsbQ), PsbU, PsbV and a large number of cofactors. It forms dimeric complexes.

It is found in the cellular thylakoid membrane. Its function is as follows. One of the extrinsic, lumenal subunits of photosystem II (PSII). PSII is a light-driven water plastoquinone oxidoreductase, using light energy to abstract electrons from H(2)O, generating a proton gradient subsequently used for ATP formation. The extrinsic proteins stabilize the structure of photosystem II oxygen-evolving complex (OEC), the ion environment of oxygen evolution and protect the OEC against heat-induced inactivation. The protein is Photosystem II extrinsic protein U of Leptolyngbya laminosa (Phormidium laminosum).